Here is a 138-residue protein sequence, read N- to C-terminus: ATP synthase epsilon chain (138 aa).

This sequence belongs to the ATPase epsilon chain family. F-type ATPases have 2 components, CF(1) - the catalytic core - and CF(0) - the membrane proton channel. CF(1) has five subunits: alpha(3), beta(3), gamma(1), delta(1), epsilon(1). CF(0) has three main subunits: a, b and c.

It localises to the cell inner membrane. Its function is as follows. Produces ATP from ADP in the presence of a proton gradient across the membrane. This chain is ATP synthase epsilon chain, found in Bartonella quintana (strain Toulouse) (Rochalimaea quintana).